We begin with the raw amino-acid sequence, 269 residues long: MSANGTDQQSDHGHSTSNNKDCADSPVWLIPREISMTNAYGIVARPVLITNVGSPINIMLTGGWKGRIVTATSSMRDKAVLWTSDLQHTSPNRGLFGQDTVKTHAWFLAMGTPWFLGRNILPKELLWFLTERCYKEASSAFADIPVVLKTVFEQFTSNCVPGIKPALLMDPRRFLEMRDPRKIICLCESAVRDNPGAHGMLVNCLCDRPGGLQCLAFIKLLESLFNDVIGSPEFIYLNFKCKFDGIFTTAVRAISGPSFSYSVSKVGDI.

The tract at residues 1–22 (MSANGTDQQSDHGHSTSNNKDC) is disordered.

This is an uncharacterized protein from Gallus gallus (Chicken).